Here is a 348-residue protein sequence, read N- to C-terminus: Holliday junction branch migration complex subunit RuvB (348 aa).

The large ATPase domain (RuvB-L) stretch occupies residues 4–184; sequence TDRLIAASGR…FGIVQRLEFY (181 aa). Residues isoleucine 23, arginine 24, glycine 65, lysine 68, threonine 69, threonine 70, 131-133, arginine 174, tyrosine 184, and arginine 221 each bind ATP; that span reads EDF. Threonine 69 lines the Mg(2+) pocket. Residues 185–255 form a small ATPAse domain (RuvB-S) region; that stretch reads SNKDLATIVS…VADMALNLLD (71 aa). The head domain (RuvB-H) stretch occupies residues 258-348; the sequence is ERGFDHSDRR…GGEYAAQDDE (91 aa). Arginine 294, arginine 313, and arginine 318 together coordinate DNA.

This sequence belongs to the RuvB family. Homohexamer. Forms an RuvA(8)-RuvB(12)-Holliday junction (HJ) complex. HJ DNA is sandwiched between 2 RuvA tetramers; dsDNA enters through RuvA and exits via RuvB. An RuvB hexamer assembles on each DNA strand where it exits the tetramer. Each RuvB hexamer is contacted by two RuvA subunits (via domain III) on 2 adjacent RuvB subunits; this complex drives branch migration. In the full resolvosome a probable DNA-RuvA(4)-RuvB(12)-RuvC(2) complex forms which resolves the HJ.

The protein localises to the cytoplasm. The catalysed reaction is ATP + H2O = ADP + phosphate + H(+). Its function is as follows. The RuvA-RuvB-RuvC complex processes Holliday junction (HJ) DNA during genetic recombination and DNA repair, while the RuvA-RuvB complex plays an important role in the rescue of blocked DNA replication forks via replication fork reversal (RFR). RuvA specifically binds to HJ cruciform DNA, conferring on it an open structure. The RuvB hexamer acts as an ATP-dependent pump, pulling dsDNA into and through the RuvAB complex. RuvB forms 2 homohexamers on either side of HJ DNA bound by 1 or 2 RuvA tetramers; 4 subunits per hexamer contact DNA at a time. Coordinated motions by a converter formed by DNA-disengaged RuvB subunits stimulates ATP hydrolysis and nucleotide exchange. Immobilization of the converter enables RuvB to convert the ATP-contained energy into a lever motion, pulling 2 nucleotides of DNA out of the RuvA tetramer per ATP hydrolyzed, thus driving DNA branch migration. The RuvB motors rotate together with the DNA substrate, which together with the progressing nucleotide cycle form the mechanistic basis for DNA recombination by continuous HJ branch migration. Branch migration allows RuvC to scan DNA until it finds its consensus sequence, where it cleaves and resolves cruciform DNA. The protein is Holliday junction branch migration complex subunit RuvB of Pseudomonas entomophila (strain L48).